Consider the following 524-residue polypeptide: Cytochrome P450 CYP749A22 (524 aa).

The helical transmembrane segment at 12 to 32 threads the bilayer; it reads TPILFQFLLSSLCVFLLFVFI. Cysteine 472 provides a ligand contact to heme.

It belongs to the cytochrome P450 family. Heme is required as a cofactor.

The protein resides in the membrane. Functionally, probable heme-thiolate monooxygenase. The protein is Cytochrome P450 CYP749A22 of Panax ginseng (Korean ginseng).